Reading from the N-terminus, the 624-residue chain is tRNA uridine 5-carboxymethylaminomethyl modification enzyme MnmG (624 aa).

FAD contacts are provided by residues 13-18, Val125, and Ser180; that span reads GGGHAG. Residue 273–287 participates in NAD(+) binding; sequence GPRYCPSIEDKIVRF. Gln370 provides a ligand contact to FAD.

This sequence belongs to the MnmG family. As to quaternary structure, homodimer. Heterotetramer of two MnmE and two MnmG subunits. FAD is required as a cofactor.

It localises to the cytoplasm. NAD-binding protein involved in the addition of a carboxymethylaminomethyl (cmnm) group at the wobble position (U34) of certain tRNAs, forming tRNA-cmnm(5)s(2)U34. The protein is tRNA uridine 5-carboxymethylaminomethyl modification enzyme MnmG of Legionella pneumophila subsp. pneumophila (strain Philadelphia 1 / ATCC 33152 / DSM 7513).